We begin with the raw amino-acid sequence, 331 residues long: DNA-directed RNA polymerase subunit alpha (331 aa).

Residues 1-232 (MQGTFRDFLK…DQLSVFVDLE (232 aa)) are alpha N-terminal domain (alpha-NTD). The tract at residues 247–331 (VDPILLRPID…AGLGEDRVVG (85 aa)) is alpha C-terminal domain (alpha-CTD).

The protein belongs to the RNA polymerase alpha chain family. As to quaternary structure, homodimer. The RNAP catalytic core consists of 2 alpha, 1 beta, 1 beta' and 1 omega subunit. When a sigma factor is associated with the core the holoenzyme is formed, which can initiate transcription.

The catalysed reaction is RNA(n) + a ribonucleoside 5'-triphosphate = RNA(n+1) + diphosphate. Its function is as follows. DNA-dependent RNA polymerase catalyzes the transcription of DNA into RNA using the four ribonucleoside triphosphates as substrates. In Alkalilimnicola ehrlichii (strain ATCC BAA-1101 / DSM 17681 / MLHE-1), this protein is DNA-directed RNA polymerase subunit alpha.